We begin with the raw amino-acid sequence, 366 residues long: Pyruvate dehydrogenase E1 component subunit beta, mitochondrial (366 aa).

The N-terminal 33 residues, 1 to 33 (MFSRLPTSLARNVARRAPTSFVRPSAAAAALRF), are a transit peptide targeting the mitochondrion. E95 lines the thiamine diphosphate pocket. Residues A196, I197, D199, and N201 each contribute to the K(+) site.

In terms of assembly, pyruvate dehydrogenase (E1) is a tetramer of 2 alpha and 2 beta subunits. Eukaryotic pyruvate dehydrogenase (PDH) complexes are organized as a core consisting of the oligomeric dihydrolipoamide acetyl-transferase (E2), around which are arranged multiple copies of pyruvate dehydrogenase (E1), dihydrolipoamide dehydrogenase (E3) and protein X (E3BP) bound by non-covalent bonds. It depends on thiamine diphosphate as a cofactor.

It is found in the mitochondrion matrix. The catalysed reaction is N(6)-[(R)-lipoyl]-L-lysyl-[protein] + pyruvate + H(+) = N(6)-[(R)-S(8)-acetyldihydrolipoyl]-L-lysyl-[protein] + CO2. Its function is as follows. The pyruvate dehydrogenase complex catalyzes the overall conversion of pyruvate to acetyl-CoA and CO(2). This Saccharomyces cerevisiae (strain ATCC 204508 / S288c) (Baker's yeast) protein is Pyruvate dehydrogenase E1 component subunit beta, mitochondrial (PDB1).